The primary structure comprises 1383 residues: MYAAGSRGHSPAFLQPQNGNGHRSPGYVPGKVVPLRPAPPPKNHASAKLTSRSQDAPATFAFSPEEQRTPSESRKRKRHKNTFICFAITSFSFFVALAVILGISSKYAPDENCPDQNPRLRNWDPGQDSAKHIVIKEGDLFRLTSDATVDSIVIQDGGLLVFGDDKDGSKNITLRTRYILIQDGGALHIGAEKCRYRSKATITLYGKSDERESMPIFGKKFIGVEAGGTLELHGAQRTSWTMLARTLHSSGLPFGSYAFEKDFSRGLNVRVIDQDTARVLENEKFDTHEYHNESRRLQEFLRAQEPGRIVAIAVGDSAVKSLLQGTIQMIQDRLGSKLIQGLGYRQAWALVGVIDGGSSSCNESVRNYENHSTGGKALAQGEFYTLDGQKFSVTAYSEWSQGISLSGFRVDIADGVKLHLLDDVSTWEAGDRIVVASTDYSMYQAEELTLLRCPECSRSQVKVKEIPQYLHVGEIIDGIDMRAEVGLLTRNIVIQGEMEDSCYAENHCQFFDYDTFGGHVMIEKNFTSVHLSYVELKHMGQQHMGRYPVHFHLCGDVDSKGGYSQPASVDGLSVHHSFSRCITVHGTSGLLIKDTIGFDTLGHCFFLEDGVEQRNILYHNLGLLTKPGTLLPTDRNSSMCTVMRDGVFGNYVPVPTTDCMAVSTFWIAHPNNHLINNAAAGSQDAGIWYLFHKEPTGESSGLQLLEKPELTPLGIFYNNRVHSNFKAGLFVDKGVKTTNASASDPREYLCLDNSARFRPHQDADPEKPRVAAIIDRLIAFKNNDNGAWVRGGDIIVQNSAFADNGKGLTFASDGSFPSDEGSSQEVTESLFVGESRNYGFQGGQNKYMGTGGIDQKPRTLPRNRTFPIRGFQIYDGPIHLTKSTFKKYVPTPDRYSSAIGFLMKNSWQTTPRNNVSLVKFGPQVSLNVFFGKPGPWFEDCELDGDKNSIFHDIDGSVTGYKDTYVGRMDNYLIRHPNCVNVTKWNAVICSGTYAQVYVQTWNTPNLSMIITRDEYPSHPMVLRGINQRAISPQYQPVVMLEKGYTIHWNGPAPRTTFLYLVNFNKDDWIRVGLCYPANTSFQVTVGFLQRQNGSLSRIEDYEPARSMEELQKKPSERKFYFDSGTGLLFLYLRAHSHRDGHSYCSSQGCERVKIQAATDSKDISNCMAKAYPQYYKKPSAVKRMPAMLTGLCQGCGTHQMVFTSDPHKSYLPVRFQSPGKAEIQRGDPSIISVNGTDFTFRSAGALLLIVDACSVPFRVKEKRMFLSADVSHMEEYFKASIPPRSIVLLSTRGEIKQLNISDSLAVLGLAKPAHLYSKGSVVFLGFSGNFAPSWTKLFTSPDEQGLGVLEQFLPLQMEEYGCSRTGSVHRRDLDLLQQALKVL.

The segment at 1–76 (MYAAGSRGHS…QRTPSESRKR (76 aa)) is disordered. The Cytoplasmic portion of the chain corresponds to 1–82 (MYAAGSRGHS…SRKRKRHKNT (82 aa)). Phosphoserine occurs at positions 10, 53, and 63. The chain crosses the membrane as a helical; Signal-anchor for type II membrane protein span at residues 83-103 (FICFAITSFSFFVALAVILGI). Topologically, residues 104-1383 (SSKYAPDENC…DLLQQALKVL (1280 aa)) are extracellular. In terms of domain architecture, G8 spans 121–245 (RNWDPGQDSA…QRTSWTMLAR (125 aa)). A GG-type lectin 1 domain is found at 255–412 (GSYAFEKDFS…ISLSGFRVDI (158 aa)). Residue Asn292 is glycosylated (N-linked (GlcNAc...) asparagine). PbH1 repeat units lie at residues 669 to 691 (HPNN…WYLF), 711 to 733 (TPLG…FVDK), and 791 to 812 (GGDI…TFAS). Residues Asn914 and Asn1234 are each glycosylated (N-linked (GlcNAc...) asparagine). A GG-type lectin 2 domain is found at 1208 to 1366 (KSYLPVRFQS…MEEYGCSRTG (159 aa)).

The protein belongs to the CEMIP family. Ca(2+) is required as a cofactor. Widely expressed. Strongly expressed in endothelial cells in the subcapsular sinus of lymph nodes and in the liver sinusoid, two primary sites implicated in systemic hyaluronan turnover.

It is found in the cell membrane. It carries out the reaction Random hydrolysis of (1-&gt;4)-linkages between N-acetyl-beta-D-glucosamine and D-glucuronate residues in hyaluronate.. Its function is as follows. Cell surface hyaluronidase that mediates the initial cleavage of extracellular high-molecular-weight hyaluronan into intermediate-size hyaluronan of approximately 5 kDa fragments. Very specific to hyaluronan; not able to cleave chondroitin sulfate or dermatan sulfate. Has an essential function in systemic hyaluronan catabolism and turnover and regulates cell adhesion and migration via hyaluronan degradation at focal adhesion sites. Acts as a regulator of angiogenesis and heart morphogenesis by mediating degradation of extracellular hyaluronan, thereby regulating VEGF signaling. The protein is Cell surface hyaluronidase of Mus musculus (Mouse).